The chain runs to 178 residues: Large ribosomal subunit protein uL5 (178 aa).

The protein belongs to the universal ribosomal protein uL5 family. In terms of assembly, part of the 50S ribosomal subunit; contacts the 5S rRNA and probably tRNA. Forms a bridge to the 30S subunit in the 70S ribosome.

Its function is as follows. This is one of the proteins that bind and probably mediate the attachment of the 5S RNA into the large ribosomal subunit, where it forms part of the central protuberance. In the 70S ribosome it contacts protein S13 of the 30S subunit (bridge B1b), connecting the 2 subunits; this bridge is implicated in subunit movement. May contact the P site tRNA; the 5S rRNA and some of its associated proteins might help stabilize positioning of ribosome-bound tRNAs. The polypeptide is Large ribosomal subunit protein uL5 (Sulfolobus acidocaldarius (strain ATCC 33909 / DSM 639 / JCM 8929 / NBRC 15157 / NCIMB 11770)).